Consider the following 345-residue polypeptide: uncharacterized protein (345 aa).

The protein belongs to the Gfo/Idh/MocA family. Biliverdin reductase subfamily.

This is an uncharacterized protein from Escherichia coli (strain K12).